The sequence spans 492 residues: Cytochrome P450 2B19 (492 aa).

Residue Ser-129 is modified to Phosphoserine; by PKA. Cys-437 is a heme binding site.

Belongs to the cytochrome P450 family. It depends on heme as a cofactor. In terms of tissue distribution, expressed only in differentiated keratinocytes in skin.

The protein resides in the endoplasmic reticulum membrane. Its subcellular location is the microsome membrane. The enzyme catalyses an organic molecule + reduced [NADPH--hemoprotein reductase] + O2 = an alcohol + oxidized [NADPH--hemoprotein reductase] + H2O + H(+). In terms of biological role, cytochromes P450 are a group of heme-thiolate monooxygenases. In liver microsomes, this enzyme is involved in an NADPH-dependent electron transport pathway. It oxidizes a variety of structurally unrelated compounds, including steroids, fatty acids, and xenobiotics. The polypeptide is Cytochrome P450 2B19 (Cyp2b19) (Mus musculus (Mouse)).